The sequence spans 534 residues: High affinity cGMP-specific 3',5'-cyclic phosphodiesterase 9A (534 aa).

One can recognise a PDEase domain in the interval 175–496; sequence PRRDVPTYPK…EHYEELKQLD (322 aa). The Proton donor role is filled by His251. Residue 251–255 participates in 3',5'-cyclic GMP binding; sequence HNFRH. Zn(2+)-binding residues include His255, His291, and Asp292. Residue Asp292 participates in 3',5'-cyclic GMP binding. Asp292 contributes to the Mg(2+) binding site. Ser318 carries the phosphoserine modification. 3',5'-cyclic GMP-binding positions include Asp401, Tyr423, and 451-452; that span reads AQ. Asp401 provides a ligand contact to Zn(2+). The interval 500-534 is disordered; sequence KELQKKTESLTSGAPENTTEKNRDAKDSEGHSPPN. Positions 517 to 534 are enriched in basic and acidic residues; the sequence is TTEKNRDAKDSEGHSPPN.

The protein belongs to the cyclic nucleotide phosphodiesterase family. PDE9 subfamily. Homodimer. The cofactor is Zn(2+). Mg(2+) serves as cofactor. As to expression, highly expressed in kidney. Lower levels in liver, lung and brain. Widely expressed in brain, with highest expression in cerebellar Purkinje cells. Present in heart (at protein level).

The protein localises to the cell projection. It localises to the ruffle membrane. Its subcellular location is the cytoplasm. The protein resides in the perinuclear region. It is found in the golgi apparatus. The protein localises to the endoplasmic reticulum. It localises to the cell membrane. Its subcellular location is the sarcolemma. The catalysed reaction is 3',5'-cyclic GMP + H2O = GMP + H(+). The protein operates within purine metabolism; 3',5'-cyclic GMP degradation; GMP from 3',5'-cyclic GMP: step 1/1. Its activity is regulated as follows. Inhibited by SCH 51866 and moderately, by zaprinast. Specifically inhibited by PF-04447943 (6-[(3S,4S)-4-methyl-1-(pyrimidin-2-ylmethyl)pyrrolidin-3-yl]-1-(tetrahydro-2H-pyran-4-yl)-1,5-dihydro-4H-pyrazolo[3,4-d]pyrimidin-4-one). In terms of biological role, specifically hydrolyzes the second messenger cGMP, which is a key regulator of many important physiological processes. Highly specific: compared to other members of the cyclic nucleotide phosphodiesterase family, has the highest affinity and selectivity for cGMP. Specifically regulates natriuretic-peptide-dependent cGMP signaling in heart, acting as a regulator of cardiac hypertrophy in myocytes and muscle. Does not regulate nitric oxide-dependent cGMP in heart. Additional experiments are required to confirm whether its ability to hydrolyze natriuretic-peptide-dependent cGMP is specific to heart or is a general feature of the protein. In brain, involved in cognitive function, such as learning and long-term memory. The protein is High affinity cGMP-specific 3',5'-cyclic phosphodiesterase 9A (Pde9a) of Mus musculus (Mouse).